The chain runs to 314 residues: UDP-3-O-acyl-N-acetylglucosamine deacetylase (314 aa).

The Zn(2+) site is built by His82, His239, and Asp243. His266 functions as the Proton donor in the catalytic mechanism.

This sequence belongs to the LpxC family. Zn(2+) serves as cofactor.

It catalyses the reaction a UDP-3-O-[(3R)-3-hydroxyacyl]-N-acetyl-alpha-D-glucosamine + H2O = a UDP-3-O-[(3R)-3-hydroxyacyl]-alpha-D-glucosamine + acetate. It participates in glycolipid biosynthesis; lipid IV(A) biosynthesis; lipid IV(A) from (3R)-3-hydroxytetradecanoyl-[acyl-carrier-protein] and UDP-N-acetyl-alpha-D-glucosamine: step 2/6. Its function is as follows. Catalyzes the hydrolysis of UDP-3-O-myristoyl-N-acetylglucosamine to form UDP-3-O-myristoylglucosamine and acetate, the committed step in lipid A biosynthesis. This chain is UDP-3-O-acyl-N-acetylglucosamine deacetylase, found in Myxococcus xanthus (strain DK1622).